A 114-amino-acid polypeptide reads, in one-letter code: Holo-[acyl-carrier-protein] synthase (114 aa).

2 residues coordinate Mg(2+): D5 and E50.

Belongs to the P-Pant transferase superfamily. AcpS family. Mg(2+) is required as a cofactor.

The protein localises to the cytoplasm. It carries out the reaction apo-[ACP] + CoA = holo-[ACP] + adenosine 3',5'-bisphosphate + H(+). Transfers the 4'-phosphopantetheine moiety from coenzyme A to a Ser of acyl-carrier-protein. The sequence is that of Holo-[acyl-carrier-protein] synthase from Campylobacter curvus (strain 525.92).